The sequence spans 152 residues: Ribosome maturation factor RimP (152 aa).

This sequence belongs to the RimP family.

It is found in the cytoplasm. Functionally, required for maturation of 30S ribosomal subunits. The protein is Ribosome maturation factor RimP of Aeromonas hydrophila subsp. hydrophila (strain ATCC 7966 / DSM 30187 / BCRC 13018 / CCUG 14551 / JCM 1027 / KCTC 2358 / NCIMB 9240 / NCTC 8049).